A 399-amino-acid chain; its full sequence is S-adenosylmethionine synthase (399 aa).

His17 provides a ligand contact to ATP. Asp19 contacts Mg(2+). Glu45 contributes to the K(+) binding site. L-methionine-binding residues include Glu58 and Gln101. The tract at residues Gln101–Glu111 is flexible loop. Residues Asp177–Lys179, Arg244–Phe245, Asp253, Arg259–Lys260, Ala276, and Lys280 each bind ATP. Residue Asp253 coordinates L-methionine. Residue Lys284 participates in L-methionine binding.

Belongs to the AdoMet synthase family. As to quaternary structure, homotetramer; dimer of dimers. The cofactor is Mg(2+). K(+) serves as cofactor.

It localises to the cytoplasm. It catalyses the reaction L-methionine + ATP + H2O = S-adenosyl-L-methionine + phosphate + diphosphate. The protein operates within amino-acid biosynthesis; S-adenosyl-L-methionine biosynthesis; S-adenosyl-L-methionine from L-methionine: step 1/1. Catalyzes the formation of S-adenosylmethionine (AdoMet) from methionine and ATP. The overall synthetic reaction is composed of two sequential steps, AdoMet formation and the subsequent tripolyphosphate hydrolysis which occurs prior to release of AdoMet from the enzyme. This Listeria innocua serovar 6a (strain ATCC BAA-680 / CLIP 11262) protein is S-adenosylmethionine synthase.